The sequence spans 1392 residues: Leucine-rich PPR motif-containing protein, mitochondrial (1392 aa).

The N-terminal 77 residues, 1–77 (MSALLRPARW…LPEEPAPVRR (77 aa)), are a transit peptide targeting the mitochondrion. 14 PPR repeats span residues 125–159 (LLRS…GTVY), 160–194 (DVSH…NIQP), 195–229 (NRVT…DLPI), 230–264 (TEAV…GIEP), 265–299 (GPDT…DHYF), 300–334 (MDRD…RRSI), 402–436 (HSSS…GFPI), 437–471 (RTHY…GVDP), 677–708 (VGDP…ESDM), 709–745 (VIGG…SAVL), 746–783 (DTAK…IKDA), 784–820 (AVLS…AKPS), 821–856 (SNIS…VLPR), and 953–987 (RDQM…NLIP). 2 positions are modified to N6-acetyllysine: K151 and K186. K291 carries the post-translational modification N6-acetyllysine. At K462 the chain carries N6-acetyllysine. The residue at position 749 (K749) is an N6-acetyllysine. S1025, S1026, and S1028 each carry phosphoserine. 6 PPR repeats span residues 1030-1064 (GDTV…DVVF), 1065-1101 (SSEA…GFTL), 1102-1136 (NGAA…EQVP), 1137-1173 (SELA…IELS), 1174-1208 (RMVF…ENQT), and 1315-1349 (NDRV…NMKL). S1137 is subject to Phosphoserine.

As to quaternary structure, component of mRNP complexes associated with HNRPA1. Component of the complex, at least composed of LRPPRC, BECN1 and BCL2; the interactions prevent BECN1 from forming an autophagy-inducing complex with PIK3C3. Interacts with CECR2, HEBP2, MAP1S, UXT, PPARGC1A and FOXO1. Interacts (via N-terminus) with EIF4E; the interaction promotes association of EIF4E with 4ESE-containing mRNAs. Interacts with exportin XPO1/CRM1; interacts both alone and in complex with EIF4E and 4ESE-containing mRNAs to form an EIF4E-dependent mRNA export complex. Interacts with importin IPO8; the interaction occurs when LRPPRC is in its RNA-free form and returns LRPPRC to the nucleus for further export rounds. Interacts with BECN1. As to expression, widely expressed. Expressed in liver, brain and a subset of small diameter sensory neurons in the dorsal root ganglion (at protein level).

The protein localises to the mitochondrion. It localises to the nucleus. It is found in the nucleoplasm. The protein resides in the nucleus inner membrane. Its subcellular location is the nucleus outer membrane. May play a role in RNA metabolism in both nuclei and mitochondria. In the nucleus binds to HNRPA1-associated poly(A) mRNAs and is part of nmRNP complexes at late stages of mRNA maturation which are possibly associated with nuclear mRNA export. Positively modulates nuclear export of mRNAs containing the EIF4E sensitivity element (4ESE) by binding simultaneously to both EIF4E and the 4ESE and acting as a platform for assembly for the RNA export complex. Also binds to exportin XPO1/CRM1 to engage the nuclear pore and traffic the bound mRNAs to the cytoplasm. May bind mature mRNA in the nucleus outer membrane. In mitochondria binds to poly(A) mRNA. Plays a role in translation or stability of mitochondrially encoded cytochrome c oxidase (COX) subunits. May be involved in transcription regulation. Cooperates with PPARGC1A to regulate certain mitochondrially encoded genes and gluconeogenic genes and may regulate docking of PPARGC1A to transcription factors. Seems to be involved in the transcription regulation of the multidrug-related genes MDR1 and MVP. Part of a nuclear factor that binds to the invMED1 element of MDR1 and MVP gene promoters. Binds single-stranded DNA. Required for maintaining mitochondrial potential. Suppresses the initiation of basal levels of autophagy and mitophagy by sustaining BCL2 levels. The protein is Leucine-rich PPR motif-containing protein, mitochondrial (Lrpprc) of Rattus norvegicus (Rat).